Here is a 461-residue protein sequence, read N- to C-terminus: MNLQIIILAAGQGKRMYSDTPKVLHHLAGKPLLTHVVETAQQLNPDAIHVIYGHGGEQIKSSLPNLPVHWVHQAEQLGTGHAVLQAMPHIPDDAYVLVLSADVPLIQVETLQSLIECSQRQNPDHSVLALLVAELENPSGLGRIIRNNQGEIYSIVEEKDANEQVKNIKEIYSGVCCTLANNLKKWLPQLSNSNAQGEYYLTEIISFAVQNKTPIRSLTTKNSFEVQGINNRQQLQQLERIWQQRAANQLMEKGVTLADANRFDLRGELYCGKDVYIDINCIFTGKVVLGNGCKIGPNCSLTNVTLGDGCEVYANSVLEGCHIANDCHIGPFARLRSGTQLASHCKIGNFVETKKAIFDEGTKASHLSYLGDVLLGKNVNVGAGTITCNYDGVNKHQTIIEDGVFIGSDTQLVAPVTVGANATIGAGSTIRRNVPPDELTLTESRQKTIYGWKRPAKRERD.

Residues 1 to 232 form a pyrophosphorylase region; the sequence is MNLQIIILAA…SFEVQGINNR (232 aa). UDP-N-acetyl-alpha-D-glucosamine-binding positions include 8 to 11, Lys22, Gln73, and 78 to 79; these read LAAG and GT. A Mg(2+)-binding site is contributed by Asp102. UDP-N-acetyl-alpha-D-glucosamine-binding residues include Gly142, Glu157, and Asn230. Residue Asn230 coordinates Mg(2+). A linker region spans residues 233–253; that stretch reads QQLQQLERIWQQRAANQLMEK. Residues 254–461 are N-acetyltransferase; that stretch reads GVTLADANRF…WKRPAKRERD (208 aa). 2 residues coordinate UDP-N-acetyl-alpha-D-glucosamine: Arg336 and Lys354. Catalysis depends on His366, which acts as the Proton acceptor. Residues Tyr369 and Asn380 each contribute to the UDP-N-acetyl-alpha-D-glucosamine site. Acetyl-CoA contacts are provided by residues Ala383, 389 to 390, Ser408, and Ala426; that span reads NY.

It in the N-terminal section; belongs to the N-acetylglucosamine-1-phosphate uridyltransferase family. The protein in the C-terminal section; belongs to the transferase hexapeptide repeat family. Homotrimer. The cofactor is Mg(2+).

The protein resides in the cytoplasm. It carries out the reaction alpha-D-glucosamine 1-phosphate + acetyl-CoA = N-acetyl-alpha-D-glucosamine 1-phosphate + CoA + H(+). It catalyses the reaction N-acetyl-alpha-D-glucosamine 1-phosphate + UTP + H(+) = UDP-N-acetyl-alpha-D-glucosamine + diphosphate. Its pathway is nucleotide-sugar biosynthesis; UDP-N-acetyl-alpha-D-glucosamine biosynthesis; N-acetyl-alpha-D-glucosamine 1-phosphate from alpha-D-glucosamine 6-phosphate (route II): step 2/2. The protein operates within nucleotide-sugar biosynthesis; UDP-N-acetyl-alpha-D-glucosamine biosynthesis; UDP-N-acetyl-alpha-D-glucosamine from N-acetyl-alpha-D-glucosamine 1-phosphate: step 1/1. It functions in the pathway bacterial outer membrane biogenesis; LPS lipid A biosynthesis. Functionally, catalyzes the last two sequential reactions in the de novo biosynthetic pathway for UDP-N-acetylglucosamine (UDP-GlcNAc). The C-terminal domain catalyzes the transfer of acetyl group from acetyl coenzyme A to glucosamine-1-phosphate (GlcN-1-P) to produce N-acetylglucosamine-1-phosphate (GlcNAc-1-P), which is converted into UDP-GlcNAc by the transfer of uridine 5-monophosphate (from uridine 5-triphosphate), a reaction catalyzed by the N-terminal domain. The polypeptide is Bifunctional protein GlmU (Legionella pneumophila (strain Lens)).